A 285-amino-acid chain; its full sequence is (3S)-malyl-CoA thioesterase (285 aa).

Substrate is bound by residues arginine 70 and glutamate 122. Mg(2+) is bound by residues glutamate 122 and aspartate 148.

Belongs to the HpcH/HpaI aldolase family. Homodimer or homotrimer. Requires Mg(2+) as cofactor.

The catalysed reaction is (S)-malyl-CoA + H2O = (S)-malate + CoA + H(+). In terms of biological role, catalyzes the hydrolysis of (3S)-malyl-CoA to (3S)-malate and free CoA. Inactive towards beta-methylmalyl-CoA and other CoA esters. The protein is (3S)-malyl-CoA thioesterase of Cereibacter sphaeroides (strain ATCC 17025 / ATH 2.4.3) (Rhodobacter sphaeroides).